We begin with the raw amino-acid sequence, 34 residues long: U1-poneritoxin-Na2a (34 aa).

As to expression, expressed by the venom gland.

Its subcellular location is the secreted. Functionally, may have antimicrobial properties, like most ant linear peptides. The protein is U1-poneritoxin-Na2a of Neoponera apicalis (Ant).